The sequence spans 499 residues: Apolipoprotein N-acyltransferase (499 aa).

Helical transmembrane passes span 9 to 29 (LLLG…PALL), 50 to 70 (LGYI…SIGV), 77 to 97 (FWWA…FFVS), 114 to 134 (FIFC…FTGL), 148 to 168 (ILIQ…VIYI), and 183 to 203 (LKVL…YGSV). Residues 220-464 (VQPSIPQTEK…DGLIPKKLDS (245 aa)) enclose the CN hydrolase domain. Glutamate 259 functions as the Proton acceptor in the catalytic mechanism. The active site involves lysine 322. Residue cysteine 372 is the Nucleophile of the active site. Residues 466–486 (TIFSKFGNITILLIVFFIFLV) form a helical membrane-spanning segment.

It belongs to the CN hydrolase family. Apolipoprotein N-acyltransferase subfamily.

The protein resides in the cell inner membrane. The catalysed reaction is N-terminal S-1,2-diacyl-sn-glyceryl-L-cysteinyl-[lipoprotein] + a glycerophospholipid = N-acyl-S-1,2-diacyl-sn-glyceryl-L-cysteinyl-[lipoprotein] + a 2-acyl-sn-glycero-3-phospholipid + H(+). The protein operates within protein modification; lipoprotein biosynthesis (N-acyl transfer). Its function is as follows. Catalyzes the phospholipid dependent N-acylation of the N-terminal cysteine of apolipoprotein, the last step in lipoprotein maturation. In Rickettsia bellii (strain RML369-C), this protein is Apolipoprotein N-acyltransferase.